Reading from the N-terminus, the 69-residue chain is Mitotic-spindle organizing protein 1 (69 aa).

This sequence belongs to the MOZART1 family. Part of the gamma-tubulin complex.

Its subcellular location is the cytoplasm. The protein resides in the cytoskeleton. It localises to the microtubule organizing center. The protein localises to the spindle. Required for gamma-tubulin complex recruitment to the microtubule organizing centers (MTOCs). This Picea sitchensis (Sitka spruce) protein is Mitotic-spindle organizing protein 1.